The primary structure comprises 95 residues: Aspartyl/glutamyl-tRNA(Asn/Gln) amidotransferase subunit C (95 aa).

Belongs to the GatC family. As to quaternary structure, heterotrimer of A, B and C subunits.

The catalysed reaction is L-glutamyl-tRNA(Gln) + L-glutamine + ATP + H2O = L-glutaminyl-tRNA(Gln) + L-glutamate + ADP + phosphate + H(+). It carries out the reaction L-aspartyl-tRNA(Asn) + L-glutamine + ATP + H2O = L-asparaginyl-tRNA(Asn) + L-glutamate + ADP + phosphate + 2 H(+). In terms of biological role, allows the formation of correctly charged Asn-tRNA(Asn) or Gln-tRNA(Gln) through the transamidation of misacylated Asp-tRNA(Asn) or Glu-tRNA(Gln) in organisms which lack either or both of asparaginyl-tRNA or glutaminyl-tRNA synthetases. The reaction takes place in the presence of glutamine and ATP through an activated phospho-Asp-tRNA(Asn) or phospho-Glu-tRNA(Gln). In Pseudomonas fluorescens (strain ATCC BAA-477 / NRRL B-23932 / Pf-5), this protein is Aspartyl/glutamyl-tRNA(Asn/Gln) amidotransferase subunit C.